The chain runs to 416 residues: Sulfoquinovosyl glycerol-binding protein SmoF (416 aa).

The signal sequence occupies residues 1-29 (MTLKTIRGKALMGAALCATMLTFSGQAFA). Gln-40 lines the 3-(6-sulfo-alpha-D-quinovosyl)glycerol pocket. A 6-sulfo-D-quinovose-binding site is contributed by His-41. Residues Ser-71, Asp-95, Asp-141, Gly-194, Thr-248, Gly-303, Trp-304, and Arg-373 each coordinate 3-(6-sulfo-alpha-D-quinovosyl)glycerol. Gly-303, Trp-304, and Arg-373 together coordinate 6-sulfo-D-quinovose.

It belongs to the bacterial solute-binding protein 1 family. In terms of assembly, the complex is probably composed of two ATP-binding proteins (SmoE), two transmembrane proteins (SmoG and SmoH) and a solute-binding protein (SmoF).

It localises to the periplasm. Functionally, part of the ABC transporter complex SmoEFGH involved in sulfoquinovosyl glycerol (SQGro) uptake. Binds sulfoquinovosyl glycerol (SQGro). Can also bind sulfoquinovose (SQ), methyl alpha-sulfoquinovoside (SQMe) and a short-chain derivative of sulfoquinovosyl diacylglycerol (SQDG). Cannot bind D-glucose and D-glucuronic acid. This is Sulfoquinovosyl glycerol-binding protein SmoF from Agrobacterium fabrum (strain C58 / ATCC 33970) (Agrobacterium tumefaciens (strain C58)).